Consider the following 875-residue polypeptide: Serine/threonine-protein kinase D2 (875 aa).

A disordered region spans residues 1 to 33 (MAAAPSHPAGLPCSPGPGSPPPPGGSDLQSLPP). Over residues 14-24 (SPGPGSPPPPG) the composition is skewed to pro residues. Ser26 and Ser30 each carry phosphoserine. Phosphotyrosine is present on Tyr87. The Phorbol-ester/DAG-type 1 zinc finger occupies 138–188 (PHALTVHSYRAPAFCDHCGEMLFGLVRQGLKCDGCGLNYHKRCAFSIPNNC). A phosphoserine mark is found at Ser197, Ser198, Ser200, Ser203, Ser206, Ser211, Ser212, and Ser214. A disordered region spans residues 224–247 (RSTTDLLPRRPPSSSSSSSSSSFY). The span at 236-245 (SSSSSSSSSS) shows a compositional bias: low complexity. Ser244 bears the Phosphoserine; by CSNK1D and CSNK1E mark. Residue Ser245 is modified to Phosphoserine. The Phorbol-ester/DAG-type 2 zinc finger occupies 265-315 (PHTFLIHSYTRPTVCQACKKLLKGLFRQGLQCKDCKFNCHKRCATRVPNDC). In terms of domain architecture, PH spans 398–510 (TTLREGWVVH…WETAIRQALM (113 aa)). Tyr408 is modified (phosphotyrosine). A Phosphotyrosine; by ABL1 modification is found at Tyr439. At Ser519 the chain carries Phosphoserine. The region spanning 552 to 808 (IFPDEVLGSG…VDKSLSHPWL (257 aa)) is the Protein kinase domain. ATP is bound by residues 558-566 (LGSGQFGVV) and Lys581. The Proton acceptor role is filled by Asp675. Ser707 is subject to Phosphoserine; by PKC. A Phosphoserine modification is found at Ser711. Tyr718 carries the post-translational modification Phosphotyrosine; by ABL1. The short motif at 725 to 727 (LNQ) is the Important for ABL1-mediated Tyr-718 phosphorylation element. Phosphoserine; by autocatalysis is present on Ser873.

Belongs to the protein kinase superfamily. CAMK Ser/Thr protein kinase family. PKD subfamily. Interacts (via C-terminus) with LCK. Interacts (via N-terminus and zing-finger domain 1 and 2) with PRKCD in response to oxidative stress; the interaction is independent of PRKD2 tyrosine phosphorylation. The cofactor is Mg(2+). Phosphorylation of Ser-873 correlates with the activation status of the kinase. Ser-707 is probably phosphorylated by PKC. Phosphorylation at Ser-244 by CSNK1D and CSNK1E promotes nuclear localization and substrate targeting. Phosphorylation at Ser-244, Ser-707 and Ser-711 is required for nuclear localization. Phosphorylated at Tyr-438 by ABL1 in response to oxidative stress. Phosphorylated at Tyr-718 by ABL1 specifically in response to oxidative stress; requires prior phosphorylation at Ser-707 or/and Ser-711.

It localises to the cytoplasm. The protein resides in the cell membrane. Its subcellular location is the golgi apparatus. It is found in the trans-Golgi network. The catalysed reaction is L-seryl-[protein] + ATP = O-phospho-L-seryl-[protein] + ADP + H(+). It catalyses the reaction L-threonyl-[protein] + ATP = O-phospho-L-threonyl-[protein] + ADP + H(+). With respect to regulation, activated by DAG and phorbol esters. Phorbol-ester/DAG-type domains bind DAG, mediating translocation to membranes. Autophosphorylation of Ser-711 and phosphorylation of Ser-707 by PKC relieves auto-inhibition by the PH domain. Catalytic activity is further increased by phosphorylation at Tyr-718 in response to oxidative stress. In terms of biological role, serine/threonine-protein kinase that converts transient diacylglycerol (DAG) signals into prolonged physiological effects downstream of PKC, and is involved in the regulation of cell proliferation via MAPK1/3 (ERK1/2) signaling, oxidative stress-induced NF-kappa-B activation, inhibition of HDAC7 transcriptional repression, signaling downstream of T-cell antigen receptor (TCR) and cytokine production, and plays a role in Golgi membrane trafficking, angiogenesis, secretory granule release and cell adhesion. May potentiate mitogenesis induced by the neuropeptide bombesin by mediating an increase in the duration of MAPK1/3 (ERK1/2) signaling, which leads to accumulation of immediate-early gene products including FOS that stimulate cell cycle progression. In response to oxidative stress, is phosphorylated at Tyr-438 and Tyr-718 by ABL1, which leads to the activation of PRKD2 without increasing its catalytic activity, and mediates activation of NF-kappa-B. In response to the activation of the gastrin receptor CCKBR, is phosphorylated at Ser-244 by CSNK1D and CSNK1E, translocates to the nucleus, phosphorylates HDAC7, leading to nuclear export of HDAC7 and inhibition of HDAC7 transcriptional repression of NR4A1/NUR77. Upon TCR stimulation, is activated independently of ZAP70, translocates from the cytoplasm to the nucleus and is required for interleukin-2 (IL2) promoter up-regulation. During adaptive immune responses, is required in peripheral T-lymphocytes for the production of the effector cytokines IL2 and IFNG after TCR engagement and for optimal induction of antibody responses to antigens. In epithelial cells stimulated with lysophosphatidic acid (LPA), is activated through a PKC-dependent pathway and mediates LPA-stimulated interleukin-8 (IL8) secretion via a NF-kappa-B-dependent pathway. During TCR-induced T-cell activation, interacts with and is activated by the tyrosine kinase LCK, which results in the activation of the NFAT transcription factors. In the trans-Golgi network (TGN), regulates the fission of transport vesicles that are on their way to the plasma membrane and in polarized cells is involved in the transport of proteins from the TGN to the basolateral membrane. Plays an important role in endothelial cell proliferation and migration prior to angiogenesis, partly through modulation of the expression of KDR/VEGFR2 and FGFR1, two key growth factor receptors involved in angiogenesis. In secretory pathway, is required for the release of chromogranin-A (CHGA)-containing secretory granules from the TGN. Downstream of PRKCA, plays important roles in angiotensin-2-induced monocyte adhesion to endothelial cells. In Rattus norvegicus (Rat), this protein is Serine/threonine-protein kinase D2 (Prkd2).